We begin with the raw amino-acid sequence, 234 residues long: BTB/POZ domain-containing protein KCTD5 (234 aa).

At A2 the chain carries N-acetylalanine. Residue S10 is modified to Phosphoserine. Positions 44 to 146 constitute a BTB domain; sequence KWVRLNVGGT…LVKDKIRERD (103 aa). The interval 213–234 is disordered; that stretch reads PYGTASEPSEKAKILQERGSRM. Basic and acidic residues predominate over residues 220–234; that stretch reads PSEKAKILQERGSRM.

Homopentamer. Interacts (via C-terminus) with GRASP55/GORASP2. Interacts with CUL3 and with ubiquitinated proteins. Interacts with CRY1. As to quaternary structure, (Microbial infection) Interacts with adeno-associated virus 2 (AAV-2) REP proteins.

The protein resides in the cytoplasm. It localises to the cytosol. It is found in the nucleus. Its interaction with CUL3 suggests that it may act as a substrate adapter in some E3 ligase complex. Does not affect the function of Kv channel Kv2.1/KCNB1, Kv1.2/KCNA2, Kv4.2/KCND2 and Kv3.4/KCNC4. In Homo sapiens (Human), this protein is BTB/POZ domain-containing protein KCTD5 (KCTD5).